A 206-amino-acid polypeptide reads, in one-letter code: MCNEPATSDVALPDLDWAKGDGLLPVIVQDADTLRVLMLGYMNSQALEVTQRSRLVTFYSRSKQRLWTKGERSGHVLHLVAIDADCDADTLLVQARPRGPTCHLGRTSCFPAAPGQFLGALDALVAERERERPQDSYTTALFEQGVRRIAQKVGEEGVETALAGVVQADDALLDESADLLYHLIVLLRARGLSLADAVTVLEARHR.

The segment at 1–117 is phosphoribosyl-AMP cyclohydrolase; the sequence is MCNEPATSDV…SCFPAAPGQF (117 aa). Positions 118-206 are phosphoribosyl-ATP pyrophosphohydrolase; that stretch reads LGALDALVAE…AVTVLEARHR (89 aa).

The protein in the N-terminal section; belongs to the PRA-CH family. In the C-terminal section; belongs to the PRA-PH family.

Its subcellular location is the cytoplasm. The enzyme catalyses 1-(5-phospho-beta-D-ribosyl)-ATP + H2O = 1-(5-phospho-beta-D-ribosyl)-5'-AMP + diphosphate + H(+). The catalysed reaction is 1-(5-phospho-beta-D-ribosyl)-5'-AMP + H2O = 1-(5-phospho-beta-D-ribosyl)-5-[(5-phospho-beta-D-ribosylamino)methylideneamino]imidazole-4-carboxamide. Its pathway is amino-acid biosynthesis; L-histidine biosynthesis; L-histidine from 5-phospho-alpha-D-ribose 1-diphosphate: step 2/9. It functions in the pathway amino-acid biosynthesis; L-histidine biosynthesis; L-histidine from 5-phospho-alpha-D-ribose 1-diphosphate: step 3/9. The polypeptide is Histidine biosynthesis bifunctional protein HisIE (hisI) (Xylella fastidiosa (strain Temecula1 / ATCC 700964)).